Consider the following 499-residue polypeptide: Thioredoxin reductase 1, cytoplasmic (499 aa).

Residues 22–23, 42–43, 58–59, and 63–67 contribute to the FAD site; these read SG, DF, TC, and SCIPK. A disulfide bridge links Cys-59 with Cys-64. N6-succinyllysine is present on Lys-68. Phosphotyrosine is present on Tyr-131. Residues 131 to 132 and Thr-161 each bind FAD; that span reads YG. Residues Arg-166, 198–204, 221–222, Arg-226, 226–228, 292–293, and Lys-315 each bind NADP(+); these read ASYVALE, RS, RGF, and GR. Position 200 (Tyr-200) interacts with FAD. FAD contacts are provided by residues Asp-334, 341 to 343, and His-472; that span reads ELT. Glu-341 contributes to the NADP(+) binding site. His-472 functions as the Proton acceptor in the catalytic mechanism. Residues 497 to 498 constitute a cross-link (cysteinyl-selenocysteine (Cys-Sec)); that stretch reads CU. A non-standard amino acid (selenocysteine) is located at residue Sec-498.

The protein belongs to the class-I pyridine nucleotide-disulfide oxidoreductase family. As to quaternary structure, homodimer. FAD serves as cofactor. In terms of processing, ISGylated.

The protein localises to the cytoplasm. The catalysed reaction is [thioredoxin]-dithiol + NADP(+) = [thioredoxin]-disulfide + NADPH + H(+). It catalyses the reaction H2O2 + NADPH + H(+) = NADP(+) + 2 H2O. In terms of biological role, reduces disulfideprotein thioredoxin (Trx) to its dithiol-containing form. Homodimeric flavoprotein involved in the regulation of cellular redox reactions, growth and differentiation. Contains a selenocysteine residue at the C-terminal active site that is essential for catalysis. Also has reductase activity on hydrogen peroxide (H2O2). This is Thioredoxin reductase 1, cytoplasmic (TXNRD1) from Sus scrofa (Pig).